A 176-amino-acid chain; its full sequence is Urease accessory protein UreE (176 aa).

A disordered region spans residues 134–176; that stretch reads FTPEGGAYGHGRTHAHEHGHTNHHGQHHDHADHGHSHDHSHDQ. The span at 161 to 176 shows a compositional bias: basic and acidic residues; the sequence is HDHADHGHSHDHSHDQ.

It belongs to the UreE family.

The protein localises to the cytoplasm. Functionally, involved in urease metallocenter assembly. Binds nickel. Probably functions as a nickel donor during metallocenter assembly. The sequence is that of Urease accessory protein UreE from Ruegeria sp. (strain TM1040) (Silicibacter sp.).